We begin with the raw amino-acid sequence, 253 residues long: Sulfate transporter CysZ (253 aa).

The next 4 membrane-spanning stretches (helical) occupy residues Phe31–Phe51, Leu75–Ile95, Ile151–Trp171, and Ile222–Val242.

This sequence belongs to the CysZ family.

It is found in the cell inner membrane. Functionally, high affinity, high specificity proton-dependent sulfate transporter, which mediates sulfate uptake. Provides the sulfur source for the cysteine synthesis pathway. In Shigella flexneri, this protein is Sulfate transporter CysZ.